A 79-amino-acid chain; its full sequence is UPF0654 protein C11D3.01c (79 aa).

The disordered stretch occupies residues 1-79; it reads MPNPGNVIGG…RAQEELENLE (79 aa). Residues 22-45 are compositionally biased toward basic and acidic residues; that stretch reads EETKQREKEYLEEHEGEVGEEHQK.

Belongs to the UPF0654 (con-6) family.

The chain is UPF0654 protein C11D3.01c from Schizosaccharomyces pombe (strain 972 / ATCC 24843) (Fission yeast).